Reading from the N-terminus, the 203-residue chain is Cilia- and flagella-associated protein 20 (203 aa).

Belongs to the CFAP20 family.

The protein localises to the nucleus. It localises to the cytoplasm. Its subcellular location is the cytoskeleton. The protein resides in the microtubule organizing center. It is found in the centrosome. The protein localises to the centriole. It localises to the cilium basal body. Its subcellular location is the cilium axoneme. Functionally, cilium- and flagellum-specific protein that plays a role in axonemal structure organization and motility. Microtubule inner protein (MIP) part of the dynein-decorated doublet microtubules (DMTs) in cilia axoneme, which is required for motile cilia beating. Involved in the regulation of the size and morphology of cilia. Required for axonemal microtubules polyglutamylation. The protein is Cilia- and flagella-associated protein 20 of Caenorhabditis elegans.